Reading from the N-terminus, the 351-residue chain is Glycerol-1-phosphate dehydrogenase [NAD(P)+] (351 aa).

NAD(+)-binding positions include 97 to 101 (GKVID) and 119 to 122 (TSPS). Residue aspartate 124 coordinates substrate. Residue serine 128 coordinates NAD(+). Aspartate 171 is a binding site for substrate. Aspartate 171 and histidine 251 together coordinate Zn(2+). Residue histidine 255 participates in substrate binding. Histidine 267 contacts Zn(2+).

The protein belongs to the glycerol-1-phosphate dehydrogenase family. As to quaternary structure, homodimer. It depends on Zn(2+) as a cofactor.

The protein localises to the cytoplasm. It carries out the reaction sn-glycerol 1-phosphate + NAD(+) = dihydroxyacetone phosphate + NADH + H(+). The enzyme catalyses sn-glycerol 1-phosphate + NADP(+) = dihydroxyacetone phosphate + NADPH + H(+). Its pathway is membrane lipid metabolism; glycerophospholipid metabolism. Its function is as follows. Catalyzes the NAD(P)H-dependent reduction of dihydroxyacetonephosphate (DHAP or glycerone phosphate) to glycerol 1-phosphate (G1P). The G1P thus generated is used as the glycerophosphate backbone of phospholipids in the cellular membranes of Archaea. The protein is Glycerol-1-phosphate dehydrogenase [NAD(P)+] of Saccharolobus solfataricus (strain ATCC 35092 / DSM 1617 / JCM 11322 / P2) (Sulfolobus solfataricus).